The sequence spans 129 residues: ATP synthase epsilon chain (129 aa).

Belongs to the ATPase epsilon chain family. F-type ATPases have 2 components, CF(1) - the catalytic core - and CF(0) - the membrane proton channel. CF(1) has five subunits: alpha(3), beta(3), gamma(1), delta(1), epsilon(1). CF(0) has three main subunits: a, b and c.

Its subcellular location is the cell inner membrane. In terms of biological role, produces ATP from ADP in the presence of a proton gradient across the membrane. The chain is ATP synthase epsilon chain from Campylobacter jejuni subsp. doylei (strain ATCC BAA-1458 / RM4099 / 269.97).